Consider the following 263-residue polypeptide: Hydroxyethylthiazole kinase (263 aa).

Met-39 is a substrate binding site. Residues Lys-115 and Thr-160 each contribute to the ATP site. Gly-187 serves as a coordination point for substrate.

It belongs to the Thz kinase family. The cofactor is Mg(2+).

The catalysed reaction is 5-(2-hydroxyethyl)-4-methylthiazole + ATP = 4-methyl-5-(2-phosphooxyethyl)-thiazole + ADP + H(+). Its pathway is cofactor biosynthesis; thiamine diphosphate biosynthesis; 4-methyl-5-(2-phosphoethyl)-thiazole from 5-(2-hydroxyethyl)-4-methylthiazole: step 1/1. In terms of biological role, catalyzes the phosphorylation of the hydroxyl group of 4-methyl-5-beta-hydroxyethylthiazole (THZ). The chain is Hydroxyethylthiazole kinase from Staphylococcus aureus (strain bovine RF122 / ET3-1).